Reading from the N-terminus, the 483-residue chain is Fructose-like PTS system EIIBC component (483 aa).

The PTS EIIB type-2 domain maps to 1 to 105; sequence MESSLRIVAI…IDQIFSELPT (105 aa). The active-site Phosphocysteine intermediate; for EIIB activity is the cysteine 13. Cysteine 13 is subject to Phosphocysteine; by EIIA. The PTS EIIC type-2 domain maps to 128-475; that stretch reads VMSHLMAGVS…LWLRRKAKAA (348 aa). A run of 10 helical transmembrane segments spans residues 132–152, 180–200, 204–224, 227–247, 264–284, 303–323, 344–364, 380–400, 402–422, and 442–462; these read LMAG…LVAL, IGYL…ASSI, PAFA…LLGT, GAGF…VFWF, LIPF…IGPV, MKFA…GGPI, AIVG…TFIA, IVVG…AAPL, MITA…AFGI, and VGSF…FIIV.

Its subcellular location is the cell inner membrane. It catalyses the reaction D-fructose(out) + N(pros)-phospho-L-histidyl-[protein] = D-fructose 1-phosphate(in) + L-histidyl-[protein]. In terms of biological role, the phosphoenolpyruvate-dependent sugar phosphotransferase system (sugar PTS), a major carbohydrate active transport system, catalyzes the phosphorylation of incoming sugar substrates concomitantly with their translocation across the cell membrane. The enzyme II FrvAB PTS system is involved in fructose transport. The chain is Fructose-like PTS system EIIBC component from Escherichia coli (strain K12).